A 1020-amino-acid chain; its full sequence is Probable leucine-rich repeat receptor-like serine/threonine-protein kinase At3g14840 (1020 aa).

Positions M1–S26 are cleaved as a signal peptide. The Extracellular segment spans residues A27–T614. N-linked (GlcNAc...) asparagine glycans are attached at residues N50 and N81. LRR repeat units follow at residues I86–L110, P111–S134, L136–L157, T158–L181, P182–K204, T206–G231, L253–N276, M277–N301, R302–G324, and S326–Q349. N-linked (GlcNAc...) asparagine glycans are attached at residues N124, N138, and N156. An N-linked (GlcNAc...) asparagine glycan is attached at N193. N-linked (GlcNAc...) asparagine glycosylation is found at N276 and N289. N359, N386, N389, N417, N461, N469, and N498 each carry an N-linked (GlcNAc...) asparagine glycan. The LRR 11 repeat unit spans residues Q479 to V501. The chain crosses the membrane as a helical span at residues V615–W635. Over W636 to T1020 the chain is Cytoplasmic. The Protein kinase domain occupies F672 to V949. ATP is bound by residues I678–V686 and K700. Y745 is subject to Phosphotyrosine. The Proton acceptor role is filled by D798. A Phosphoserine modification is found at S831. Residues T832 and T837 each carry the phosphothreonine modification. The residue at position 845 (Y845) is a Phosphotyrosine.

The protein belongs to the protein kinase superfamily. Ser/Thr protein kinase family.

It is found in the cell membrane. It carries out the reaction L-seryl-[protein] + ATP = O-phospho-L-seryl-[protein] + ADP + H(+). It catalyses the reaction L-threonyl-[protein] + ATP = O-phospho-L-threonyl-[protein] + ADP + H(+). The protein is Probable leucine-rich repeat receptor-like serine/threonine-protein kinase At3g14840 (LRR-RLK) of Arabidopsis thaliana (Mouse-ear cress).